The chain runs to 163 residues: Beta-lactoglobulin-2 (163 aa).

2 disulfides stabilise this stretch: cysteine 66–cysteine 161 and cysteine 106–cysteine 120.

This sequence belongs to the calycin superfamily. Lipocalin family. Monomer.

The protein localises to the secreted. In terms of biological role, lactoglobulin is the primary component of whey, it binds retinol and is probably involved in the transport of that molecule. The chain is Beta-lactoglobulin-2 (LGB2) from Felis catus (Cat).